Consider the following 401-residue polypeptide: Protein nanos (401 aa).

Residues 181-207 form a disordered region; sequence LGRMSYGSAPPQVQMPPQQQHQQQQGL. The span at 190–205 shows a compositional bias: low complexity; it reads PPQVQMPPQQQHQQQQ. Residues 318–372 form a Nanos-type zinc finger; it reads HCVFCENNNEPEAVINSHSVRDNFNRVLCPKLRTYVCPICGASGDSAHTIKYCPK. Residues cysteine 319, cysteine 322, histidine 335, cysteine 346, cysteine 354, cysteine 357, histidine 365, and cysteine 370 each coordinate Zn(2+). Short sequence motifs (C2HC) lie at residues 319 to 346 and 354 to 370; these read CVFC…RVLC and CPIC…IKYC.

It belongs to the nanos family. In terms of assembly, interacts with pum and brat. Interacts with cup. Interacts with mei-P26; possibly involved in regulation of brat levels. Interacts with wh; may be involved in mei-P26-dependent derepression of the BMP signaling pathway. Acts via the formation of a quaternary complex composed of pum, nanos, brat and the 3'-UTR mRNA of hb. Binds RNA with no specificity. In terms of tissue distribution, posterior part of the embryo. While the transcript is present throughout the embryo, nanos translation is controlled by smg, and the protein is found in pole plasm and pole cells. In the female ovary expressed in germline stem cells, precystoblasts and in maturing cystoblasts; in early cystoblasts expression is post-transcriptionally repressed by bam in a 3'UTR-dependent manner.

It localises to the cytoplasm. It is found in the cytoplasmic ribonucleoprotein granule. Maternal RNA-binding protein that is required for germ cells proliferation and self-renewal. Acts by forming a complex with pum and brat that regulates translation and mRNA stability. The complex binds to the Nanos Response Element (NRE), a 16 bp sequence in the hb mRNA 3'-UTR and prevents its translation. Controls posterior development. Rescuing factor for the abdominal defect of posterior group mutants. The other posterior group genes are not required for nanos function but rather play a role in localization or distribution of nanos protein. This Drosophila melanogaster (Fruit fly) protein is Protein nanos.